We begin with the raw amino-acid sequence, 475 residues long: MSTDQQSSVEDQTVAMVNVRRANFKSFWDKYSDKPDTNSMMLNHSAEELESSDRADILASLPLLHNKDVVDIGAGIGRFTTVLAETARWVLSTDFIDSFIKKNQERNAHLGNINYQVGDAVGLKMESNSVDLVFTNWLMMYLSDEETVEFIFNCMRWLRSHGIVHLRESCSEPSTGRSKAKSMHDTANANPTHYRFSSLYINLLRAIRYRDVDNKLWRFNVQWSCSVPTYIKRSNNWRQVHWLAEKVPAEDGAKGTSFNELVELIKNTWQNEQEAWDAKLDDEKYVWTDKVFSSALTSLPSNSTFFLYTPRTVSPYCHINAHTLAETFNANVWNTEIIPEYYRTSLTKSNNLKDQRVRFGWNQSLTDSVTYWQQKDALFDVFVATEFLSTVDDETIRQLPNVMSDGAKFITLEPVDEVNEAEMKQRIQELGYTLKSFTDVTDQCIEAQEQYFKDHEQLRDEKVIRKNWVLLELTH.

The protein belongs to the class I-like SAM-binding methyltransferase superfamily.

It catalyses the reaction phosphoethanolamine + S-adenosyl-L-methionine = N-methylethanolamine phosphate + S-adenosyl-L-homocysteine + H(+). Its pathway is phospholipid metabolism; phosphatidylcholine biosynthesis; phosphocholine from phosphoethanolamine. Its activity is regulated as follows. Feedback inhibition by phosphatidylcholine. In terms of biological role, catalyzes the first step in the synthesis of phosphocholine by converting phosphoethanolamine into phospho-monomethylethanolamine (N-methylethanolamine phosphate). Phosphocholine is a precursor for phosphatidylcholine, a major component in membranes and a precursor itself in the production of glycoconjugates secreted by parasitic nematodes to avoid host immune responses. This Caenorhabditis elegans protein is Phosphoethanolamine N-methyltransferase 1.